A 475-amino-acid chain; its full sequence is Fez family zinc finger protein 1 (475 aa).

The Engrailed homology 1 repressor motif lies at 28–43 (PLAFSIERIMARTPEP). 6 consecutive C2H2-type zinc fingers follow at residues 260–282 (FTCE…MPVH), 288–310 (FVCK…KIIH), 316–338 (HKCN…TRIH), 344–366 (FVCE…KLTH), 372–394 (FKCN…MHTH), and 400–423 (FTCP…RKLH). Residues 428–475 (GLARTPAGEPGTEPPPPLPQQPPMTLPPLQPPLPTPGPLQPGLHQGHQ) form a disordered region. The segment covering 439–466 (TEPPPPLPQQPPMTLPPLQPPLPTPGPL) has biased composition (pro residues).

Belongs to the krueppel C2H2-type zinc-finger protein family. In terms of tissue distribution, expressed in brain. Little or no expression in other tissues. Overexpressed specifically in gastric cancers. A 2- to 20-fold increase is found in over 50% of gastric cancer tissues.

The protein localises to the nucleus. Transcription repressor. Involved in the axonal projection and proper termination of olfactory sensory neurons (OSN). Plays a role in rostro-caudal patterning of the diencephalon and in prethalamic formation. Expression is required in OSN to cell-autonomously regulate OSN axon projections. Regulates non-cell-autonomously the layer formation of the olfactory bulb development and the interneurons. May be required for correct rostral migration of the interneuron progenitors. This chain is Fez family zinc finger protein 1 (FEZF1), found in Homo sapiens (Human).